A 40-amino-acid chain; its full sequence is Photosystem II reaction center protein J (40 aa).

Residues 8–28 (IPLWIIGTVTGIPVIGLIGIF) traverse the membrane as a helical segment.

Belongs to the PsbJ family. As to quaternary structure, PSII is composed of 1 copy each of membrane proteins PsbA, PsbB, PsbC, PsbD, PsbE, PsbF, PsbH, PsbI, PsbJ, PsbK, PsbL, PsbM, PsbT, PsbX, PsbY, PsbZ, Psb30/Ycf12, at least 3 peripheral proteins of the oxygen-evolving complex and a large number of cofactors. It forms dimeric complexes.

Its subcellular location is the plastid. It localises to the chloroplast thylakoid membrane. In terms of biological role, one of the components of the core complex of photosystem II (PSII). PSII is a light-driven water:plastoquinone oxidoreductase that uses light energy to abstract electrons from H(2)O, generating O(2) and a proton gradient subsequently used for ATP formation. It consists of a core antenna complex that captures photons, and an electron transfer chain that converts photonic excitation into a charge separation. This chain is Photosystem II reaction center protein J, found in Citrus sinensis (Sweet orange).